A 600-amino-acid chain; its full sequence is Elongation factor 4 (600 aa).

The 183-residue stretch at 5 to 187 folds into the tr-type G domain; it reads KYIRNFSIIA…AIVNKLPPPK (183 aa). GTP-binding positions include 17–22 and 134–137; these read DHGKST and NKID.

Belongs to the TRAFAC class translation factor GTPase superfamily. Classic translation factor GTPase family. LepA subfamily.

The protein resides in the cell inner membrane. The enzyme catalyses GTP + H2O = GDP + phosphate + H(+). Required for accurate and efficient protein synthesis under certain stress conditions. May act as a fidelity factor of the translation reaction, by catalyzing a one-codon backward translocation of tRNAs on improperly translocated ribosomes. Back-translocation proceeds from a post-translocation (POST) complex to a pre-translocation (PRE) complex, thus giving elongation factor G a second chance to translocate the tRNAs correctly. Binds to ribosomes in a GTP-dependent manner. This is Elongation factor 4 from Rickettsia bellii (strain OSU 85-389).